Reading from the N-terminus, the 278-residue chain is Multidrug-efflux transporter 1 regulator (278 aa).

In terms of domain architecture, HTH merR-type spans 5 to 75; the sequence is YYSIGEVSKL…LEEMKKAQDL (71 aa). Positions 8–27 form a DNA-binding region, H-T-H motif; that stretch reads IGEVSKLANVSIKALRYYDK.

Binds DNA as a homodimer.

In terms of biological role, activates transcription of the bmr gene in response to structurally dissimilar drugs. Binds rhodamine as an inducer. In Bacillus subtilis (strain 168), this protein is Multidrug-efflux transporter 1 regulator (bmrR).